Reading from the N-terminus, the 192-residue chain is Large ribosomal subunit protein uL3 (192 aa).

Belongs to the universal ribosomal protein uL3 family. As to quaternary structure, part of the 50S ribosomal subunit. Forms a cluster with proteins L14 and L19.

Its function is as follows. One of the primary rRNA binding proteins, it binds directly near the 3'-end of the 23S rRNA, where it nucleates assembly of the 50S subunit. The chain is Large ribosomal subunit protein uL3 (rplC) from Helicobacter hepaticus (strain ATCC 51449 / 3B1).